The following is a 355-amino-acid chain: SH3 domain-containing protein Dlish (355 aa).

3 consecutive SH3 domains span residues 57–117 (SPDS…PCNT), 183–243 (EPSG…PADS), and 287–352 (YHGT…PPAM).

As to quaternary structure, interacts with dachs (via C-terminus); the interaction is direct. Interacts (via N-terminus including SH3 domain 1) with palmitoyltransferase app; this leads to palmitoylation of Dlish by app. Also interacts with dco, ft, ft-regulated E3 ubiquitin ligase Fbxl7, F-box protein slmb and SCF E3 ubiquitin-protein ligase complex component Cul1. Palmitoylated by app.

It localises to the cytoplasm. Its subcellular location is the cell cortex. Its function is as follows. Required for the apical cell cortex localization, total cellular level and full activity of dachs. This chain is SH3 domain-containing protein Dlish, found in Drosophila melanogaster (Fruit fly).